A 159-amino-acid polypeptide reads, in one-letter code: Nucleoside diphosphate kinase (159 aa).

ATP is bound by residues lysine 14, phenylalanine 62, arginine 90, threonine 96, and arginine 107. The active-site Pros-phosphohistidine intermediate is the histidine 123.

Belongs to the NDK family. Mg(2+) is required as a cofactor.

Its subcellular location is the cytoplasm. It catalyses the reaction a 2'-deoxyribonucleoside 5'-diphosphate + ATP = a 2'-deoxyribonucleoside 5'-triphosphate + ADP. The enzyme catalyses a ribonucleoside 5'-diphosphate + ATP = a ribonucleoside 5'-triphosphate + ADP. Functionally, major role in the synthesis of nucleoside triphosphates other than ATP. The ATP gamma phosphate is transferred to the NDP beta phosphate via a ping-pong mechanism, using a phosphorylated active-site intermediate. In Pyrococcus abyssi (strain GE5 / Orsay), this protein is Nucleoside diphosphate kinase.